A 192-amino-acid polypeptide reads, in one-letter code: Casparian strip membrane protein 1 (192 aa).

Residues 1 to 30 lie on the Cytoplasmic side of the membrane; that stretch reads MSTTVDVPESSNVAKGKAIAVARPGGWKKG. Residues 31–51 form a helical membrane-spanning segment; that stretch reads LAIMDFILRLGGIAASLGAAA. The Extracellular portion of the chain corresponds to 52 to 80; that stretch reads TMGTSDQTLPFFTQFFQFEASYDSFTTFQ. A helical membrane pass occupies residues 81 to 101; that stretch reads FFVITMALVAGYLVLSLPFSV. The Cytoplasmic segment spans residues 102 to 113; sequence VAIIRPHAPGPR. The helical transmembrane segment at 114–134 threads the bilayer; that stretch reads LFLIILDTVFLTLATASGASA. The Extracellular portion of the chain corresponds to 135-166; the sequence is AAIVYLAHNGNQDSNWLAICNQFGDFCAQTSG. The chain crosses the membrane as a helical span at residues 167 to 187; it reads AVVASFVAVVILVLLVIMSAL. Topologically, residues 188-192 are cytoplasmic; sequence ALRRH.

The protein belongs to the Casparian strip membrane proteins (CASP) family. In terms of assembly, homodimer and heterodimers.

Its subcellular location is the cell membrane. Functionally, regulates membrane-cell wall junctions and localized cell wall deposition. Required for establishment of the Casparian strip membrane domain (CSD) and the subsequent formation of Casparian strips, a cell wall modification of the root endodermis that determines an apoplastic barrier between the intraorganismal apoplasm and the extraorganismal apoplasm and prevents lateral diffusion. This is Casparian strip membrane protein 1 from Vigna unguiculata (Cowpea).